Here is a 96-residue protein sequence, read N- to C-terminus: UPF0235 protein Acid345_4205 (96 aa).

It belongs to the UPF0235 family.

This chain is UPF0235 protein Acid345_4205, found in Koribacter versatilis (strain Ellin345).